A 359-amino-acid chain; its full sequence is Alanine racemase, biosynthetic (359 aa).

K34 serves as the catalytic Proton acceptor; specific for D-alanine. K34 carries the N6-(pyridoxal phosphate)lysine modification. R129 serves as a coordination point for substrate. Y255 acts as the Proton acceptor; specific for L-alanine in catalysis. M303 contacts substrate.

Belongs to the alanine racemase family. Pyridoxal 5'-phosphate is required as a cofactor.

The enzyme catalyses L-alanine = D-alanine. It participates in amino-acid biosynthesis; D-alanine biosynthesis; D-alanine from L-alanine: step 1/1. Its pathway is cell wall biogenesis; peptidoglycan biosynthesis. Its function is as follows. Catalyzes the interconversion of L-alanine and D-alanine. Provides the D-alanine required for cell wall biosynthesis. The chain is Alanine racemase, biosynthetic (alr) from Salmonella typhi.